A 431-amino-acid chain; its full sequence is MLERLSWKRLALELFLACIPALILGAFVGHLPWFLLAAVTGLLIWHFWNLMRLSWWLWVDRSMTPPPGRGSWEPLLYGLHQMQMRNKKRRRELGSLIKRFRSGAESLPDAVVLTTEEGAIFWCNGLAQQILNLRWPDDSGQNILNLLRYPEFANYLKQRDFSKPLNLVLNNARHLEIRVMPYTDKQWLMVARDVTQMHQLEGARRNFFANVSHELRTPLTVLQGYLEMMQEQVLEGATREKALHTMREQTQRMEGLVKQLLTLSRIEAAPALAMNDRIDVPMMLRVVEREAQTLSQEKQTLIFTVDEQLKVLGNEEQLRSAISNLVYNAVNHTPPGTEIRVSWQRTPQGALFSVEDNGPGIAPEHIPLLTERFYRGDKARSRQTGGSGLGLAIVKHAVNHHDSRLEIDSTVGKGTRFSFLLPERLIARNDA.

Residues 1-13 lie on the Cytoplasmic side of the membrane; it reads MLERLSWKRLALE. A helical transmembrane segment spans residues 14–34; that stretch reads LFLACIPALILGAFVGHLPWF. Over 35-38 the chain is Periplasmic; the sequence is LLAA. Residues 39 to 59 form a helical membrane-spanning segment; sequence VTGLLIWHFWNLMRLSWWLWV. Over 60 to 431 the chain is Cytoplasmic; that stretch reads DRSMTPPPGR…PERLIARNDA (372 aa). A PAS domain is found at 98-166; that stretch reads KRFRSGAESL…KQRDFSKPLN (69 aa). A Histidine kinase domain is found at 210-425; it reads NVSHELRTPL…RFSFLLPERL (216 aa). At histidine 213 the chain carries Phosphohistidine; by autocatalysis.

The protein localises to the cell inner membrane. It carries out the reaction ATP + protein L-histidine = ADP + protein N-phospho-L-histidine.. Functionally, member of the two-component regulatory system PhoR/PhoB involved in the phosphate regulon genes expression. PhoR may function as a membrane-associated protein kinase that phosphorylates PhoB in response to environmental signals. The protein is Phosphate regulon sensor protein PhoR (phoR) of Klebsiella pneumoniae.